A 335-amino-acid polypeptide reads, in one-letter code: NAC domain-containing protein 40 (335 aa).

Positions L14–N156 constitute an NAC domain. Residues V112–S162 mediate DNA binding. Residues P245–I254 show a composition bias toward polar residues. Residues P245–I267 form a disordered region. The chain crosses the membrane as a helical span at residues V313–A333.

Proteolytically cleaved, probably by metalloprotease activity. This cleavage mediates a translocation from the plasma membrane to the nucleus. Expressed in seeds, leaves, roots and inflorescence. Expressed in roots, rosette leaves, cauline leaves, shoot apex, stems and flowers.

The protein localises to the cell membrane. Its subcellular location is the nucleus. In terms of biological role, transcriptional activator activated by proteolytic cleavage through regulated intramembrane proteolysis (RIP), probably via metalloprotease activity. Regulates gibberellic acid-mediated salt-responsive repression of seed germination and flowering via FT, thus delaying seed germination under high salinity conditions. The protein is NAC domain-containing protein 40 of Arabidopsis thaliana (Mouse-ear cress).